The sequence spans 344 residues: Lipase chaperone (344 aa).

The helical transmembrane segment at 14–34 threads the bilayer; it reads VAVYGAVGLAAIAGVAIWSGA.

Belongs to the lipase chaperone family.

Its subcellular location is the cell inner membrane. In terms of biological role, may be involved in the folding of the extracellular lipase during its passage through the periplasm. The protein is Lipase chaperone of Burkholderia ambifaria (strain MC40-6).